A 209-amino-acid chain; its full sequence is MSKVIEVNHPLVLHKLSMVRSKDTGSKDFKELVKEISMLLTYEATRDINMDEVEIETPVCKTKCRVVSGKKMAIVPILRAGLGMVDGVLSLIPAAKIGHIGLYRDEETLQPVEYFCKLPKDIEERDVIVVDPMLATGGSAADALTMLKEKGAKNLKLMCLISAPEGIKLVQEKHPDVDIYVASIDEKLNEKGYIVPGLGDAGDRLYGTK.

5-phospho-alpha-D-ribose 1-diphosphate-binding positions include arginine 79, arginine 104, and 131-139 (DPMLATGGS). Uracil contacts are provided by residues isoleucine 194 and 199–201 (GDA). Residue aspartate 200 participates in 5-phospho-alpha-D-ribose 1-diphosphate binding.

The protein belongs to the UPRTase family. Mg(2+) is required as a cofactor.

It carries out the reaction UMP + diphosphate = 5-phospho-alpha-D-ribose 1-diphosphate + uracil. It participates in pyrimidine metabolism; UMP biosynthesis via salvage pathway; UMP from uracil: step 1/1. With respect to regulation, allosterically activated by GTP. Its function is as follows. Catalyzes the conversion of uracil and 5-phospho-alpha-D-ribose 1-diphosphate (PRPP) to UMP and diphosphate. The chain is Uracil phosphoribosyltransferase from Clostridium botulinum (strain Alaska E43 / Type E3).